Reading from the N-terminus, the 59-residue chain is Cecropin-C type 2 (59 aa).

The signal sequence occupies residues 1–23 (MNFAKVFVLVAMAVLLLVGQSEA).

It belongs to the cecropin family.

The protein localises to the secreted. Cecropins have lytic and antibacterial activity against several Gram-positive and Gram-negative bacteria. This Aedes albopictus (Asian tiger mosquito) protein is Cecropin-C type 2 (CECC2).